The sequence spans 161 residues: MVSHKKNDRPRPLWILKIHKRLSLFEFKRYATGIGKDDGQDISWVLKGNAKNNVYQVTVETMENCETDECKKVIWVPDELAESTGTMFEDFKEDQPQESVSSISNNEANWGSSVNELDENYEKMQKEETFDPYDSDSDTSEDSDFDEDFEDSDKTMCSGQS.

The short motif at 72-75 (KVIW) is the PP1 binding motif element. The interval 85-161 (GTMFEDFKED…SDKTMCSGQS (77 aa)) is disordered. A compositionally biased stretch (polar residues) spans 97-115 (QESVSSISNNEANWGSSVN). The segment covering 120-129 (NYEKMQKEET) has biased composition (basic and acidic residues). Positions 130-151 (FDPYDSDSDTSEDSDFDEDFED) are enriched in acidic residues.

In terms of assembly, interacts with gsp-1 and gsp-2; the interaction is direct.

It is found in the chromosome. It localises to the nucleus. Involved in sister chromatid cohesion during mitosis and meiosis. In association with the gsp-2 phosphatase, it both restricts the localization and antagonizes the function of the air-2 kinase during meiosis I and mitosis to promote chromatid cohesion and spindle attachment. This in turn, drives germ cell immortality. Furthermore, may play a role in ensuring the timely assembly of the synaptonemal complex during prophase I of meiosis. In Caenorhabditis elegans, this protein is Long arms of the bivalent protein 1.